Consider the following 458-residue polypeptide: BPI fold-containing family B member 2 (458 aa).

The signal sequence occupies residues Met1–Ala20. Thr52 is modified (phosphothreonine; by FAM20C). Residue Ser60 is modified to Phosphoserine; by FAM20C. N-linked (GlcNAc...) asparagine glycans are attached at residues Asn96, Asn151, Asn293, and Asn332. Cys137 and Cys174 form a disulfide bridge.

Belongs to the BPI/LBP/Plunc superfamily. BPI/LBP family. In terms of tissue distribution, highly expressed in tonsils, especially in hypertrophic tonsils. Detected at very low levels in fetal liver.

The protein resides in the secreted. This chain is BPI fold-containing family B member 2 (BPIFB2), found in Homo sapiens (Human).